A 197-amino-acid polypeptide reads, in one-letter code: Probable GTP-binding protein EngB (197 aa).

In terms of domain architecture, EngB-type G spans 24–197 (DIPEIALAGR…WDAILEKVNK (174 aa)). GTP is bound by residues 32–39 (GRSNVGKS), 59–63 (GKTQL), 77–80 (DVPG), 144–147 (TKAD), and 176–178 (FSS). Positions 39 and 61 each coordinate Mg(2+).

It belongs to the TRAFAC class TrmE-Era-EngA-EngB-Septin-like GTPase superfamily. EngB GTPase family. Mg(2+) is required as a cofactor.

Its function is as follows. Necessary for normal cell division and for the maintenance of normal septation. This Streptococcus gordonii (strain Challis / ATCC 35105 / BCRC 15272 / CH1 / DL1 / V288) protein is Probable GTP-binding protein EngB.